Here is a 294-residue protein sequence, read N- to C-terminus: MSGVDQIVKKFANLGEGDREAAMKAFLAMMPVSNEPVAEPVRKAPTAKKKVNGFMGFRSNYSPLFSYLPQKMRSPFMTILWQYDPYHNEWDFMCSVYSSIRTDLEEQNVTLQLWIHYAIGQMGLIDRDHYMASFGWRLGQTRNGTTDLFRTAIPMVRRNLQPMNGLCLLIKCLESGLSKHLTNPHPIIAKLQDPSFDMIWINKPPHHQQGHTDQADNSELGMPSLFPGNHAVAAEVDGIANLPLSHRTQQGDFGTEPGFSTQFDTMLDSILENGNHPSNSHYNMSLAMDLPMTG.

The segment at residues 46-101 (TAKKKVNGFMGFRSNYSPLFSYLPQKMRSPFMTILWQYDPYHNEWDFMCSVYSSIR) is a DNA-binding region (alpha box).

The protein belongs to the MATALPHA1 family.

Its subcellular location is the nucleus. Mating type proteins are sequence specific DNA-binding proteins that act as master switches in fungal differentiation by controlling gene expression in a cell type-specific fashion. Transcriptional activator that induces the transcription of alpha-specific genes. This Sordaria equina protein is Mating type protein mtA-1 (MTA1).